The primary structure comprises 129 residues: L-ectoine synthase (129 aa).

It belongs to the ectoine synthase family.

It catalyses the reaction (2S)-4-acetamido-2-aminobutanoate = L-ectoine + H2O. It functions in the pathway amine and polyamine biosynthesis; ectoine biosynthesis; L-ectoine from L-aspartate 4-semialdehyde: step 3/3. In terms of biological role, catalyzes the circularization of gamma-N-acetyl-alpha,gamma-diaminobutyric acid (ADABA) to ectoine (1,4,5,6-tetrahydro-2-methyl-4-pyrimidine carboxylic acid), which is an excellent osmoprotectant. This Mycobacterium sp. (strain KMS) protein is L-ectoine synthase.